The sequence spans 53 residues: 20 kDa chaperonin (53 aa).

2 cpn-10 domain regions span residues 1 to 10 (YTSIKPLGDR) and 11 to 53 (VAEA…KITP).

Belongs to the GroES chaperonin family. In terms of assembly, forms stable complexes with cpn60 in the presence of ATP. Homotetramer.

The protein resides in the plastid. It localises to the chloroplast. Its function is as follows. Seems to function only as a co-chaperone, along with cpn60, and in certain cases is essential for the discharge of biologically active proteins from cpn60. The sequence is that of 20 kDa chaperonin from Populus euphratica (Euphrates poplar).